The chain runs to 238 residues: Ribosomal RNA small subunit methyltransferase G (238 aa).

S-adenosyl-L-methionine is bound by residues G77, F82, 128 to 129 (AE), and R147.

Belongs to the methyltransferase superfamily. RNA methyltransferase RsmG family.

It is found in the cytoplasm. In terms of biological role, specifically methylates the N7 position of guanine in position 535 of 16S rRNA. The protein is Ribosomal RNA small subunit methyltransferase G of Exiguobacterium sibiricum (strain DSM 17290 / CCUG 55495 / CIP 109462 / JCM 13490 / 255-15).